A 171-amino-acid polypeptide reads, in one-letter code: Shikimate kinase (171 aa).

14–19 (GAGKST) contacts ATP. Serine 18 is a Mg(2+) binding site. 3 residues coordinate substrate: aspartate 36, arginine 60, and glycine 82. Arginine 120 contacts ATP. Arginine 139 is a binding site for substrate. Glutamine 156 serves as a coordination point for ATP.

This sequence belongs to the shikimate kinase family. Monomer. The cofactor is Mg(2+).

It localises to the cytoplasm. It carries out the reaction shikimate + ATP = 3-phosphoshikimate + ADP + H(+). The protein operates within metabolic intermediate biosynthesis; chorismate biosynthesis; chorismate from D-erythrose 4-phosphate and phosphoenolpyruvate: step 5/7. Functionally, catalyzes the specific phosphorylation of the 3-hydroxyl group of shikimic acid using ATP as a cosubstrate. The polypeptide is Shikimate kinase (Shewanella frigidimarina (strain NCIMB 400)).